The chain runs to 481 residues: Aspartyl/glutamyl-tRNA(Asn/Gln) amidotransferase subunit B (481 aa).

It belongs to the GatB/GatE family. GatB subfamily. As to quaternary structure, heterotrimer of A, B and C subunits.

The enzyme catalyses L-glutamyl-tRNA(Gln) + L-glutamine + ATP + H2O = L-glutaminyl-tRNA(Gln) + L-glutamate + ADP + phosphate + H(+). It carries out the reaction L-aspartyl-tRNA(Asn) + L-glutamine + ATP + H2O = L-asparaginyl-tRNA(Asn) + L-glutamate + ADP + phosphate + 2 H(+). In terms of biological role, allows the formation of correctly charged Asn-tRNA(Asn) or Gln-tRNA(Gln) through the transamidation of misacylated Asp-tRNA(Asn) or Glu-tRNA(Gln) in organisms which lack either or both of asparaginyl-tRNA or glutaminyl-tRNA synthetases. The reaction takes place in the presence of glutamine and ATP through an activated phospho-Asp-tRNA(Asn) or phospho-Glu-tRNA(Gln). This is Aspartyl/glutamyl-tRNA(Asn/Gln) amidotransferase subunit B from Pseudomonas fluorescens (strain Pf0-1).